The sequence spans 554 residues: Hydroxylamine reductase (554 aa).

[2Fe-2S] cluster contacts are provided by cysteine 3, cysteine 6, cysteine 18, and cysteine 25. Hybrid [4Fe-2O-2S] cluster-binding residues include histidine 252, glutamate 276, cysteine 320, cysteine 408, cysteine 436, cysteine 461, glutamate 495, and lysine 497. The residue at position 408 (cysteine 408) is a Cysteine persulfide.

The protein belongs to the HCP family. [2Fe-2S] cluster serves as cofactor. The cofactor is hybrid [4Fe-2O-2S] cluster.

It localises to the cytoplasm. It carries out the reaction A + NH4(+) + H2O = hydroxylamine + AH2 + H(+). Its function is as follows. Catalyzes the reduction of hydroxylamine to form NH(3) and H(2)O. The sequence is that of Hydroxylamine reductase from Shewanella oneidensis (strain ATCC 700550 / JCM 31522 / CIP 106686 / LMG 19005 / NCIMB 14063 / MR-1).